Here is a 553-residue protein sequence, read N- to C-terminus: Coiled-coil domain-containing protein 22 homolog (553 aa).

Coiled coils occupy residues 261–404 (LEEL…TATQ) and 498–553 (NVTK…VAKA).

It belongs to the CCDC22 family.

In Drosophila pseudoobscura pseudoobscura (Fruit fly), this protein is Coiled-coil domain-containing protein 22 homolog.